We begin with the raw amino-acid sequence, 395 residues long: L-rhamnonate dehydratase (395 aa).

Substrate contacts are provided by H23 and R49. The Mg(2+) site is built by D215, E241, and E269. The active-site Proton acceptor is H319. E339 lines the substrate pocket.

It belongs to the mandelate racemase/muconate lactonizing enzyme family. RhamD subfamily. In terms of assembly, homooctamer; tetramer of dimers. It depends on Mg(2+) as a cofactor.

The catalysed reaction is L-rhamnonate = 2-dehydro-3-deoxy-L-rhamnonate + H2O. Functionally, catalyzes the dehydration of L-rhamnonate to 2-keto-3-deoxy-L-rhamnonate (KDR). The protein is L-rhamnonate dehydratase of Delftia acidovorans (strain DSM 14801 / SPH-1).